A 620-amino-acid polypeptide reads, in one-letter code: Ran-binding protein 10 (620 aa).

The disordered stretch occupies residues 1–38 (MAAATADPGAGNPQAGDSSGGDSGGGLPSPGEQELSRR). At alanine 2 the chain carries N-acetylalanine. Positions 18-28 (SSGGDSGGGLP) are enriched in gly residues. A B30.2/SPRY domain is found at 35–222 (LSRRLQRLYP…VDANFGQQPF (188 aa)). Residues 253–285 (WQAVLQNMVSSYLVHHGYCSTATAFARMTETPI) form the LisH domain. A CTLH domain is found at 291-348 (SIKNRQKIQKLVLEGRVGEAIETTQRFYPGLLEHNPNLLFMLKCRQFVEMVNGTDSEV). The segment covering 347 to 398 (EVRSLSSRSPKSQDSYPGSPSLSPRHGPSSSHIHNTGADSPSCSNGVASTKN) has biased composition (polar residues). Residues 347–460 (EVRSLSSRSP…SDSEMEMEAE (114 aa)) are disordered. The residue at position 361 (serine 361) is a Phosphoserine. Tyrosine 362 is modified (phosphotyrosine). A phosphoserine mark is found at serine 365, serine 367, serine 369, and serine 422. The span at 409 to 436 (SSSSSSSSSSSSSSPSSVNYSESNSTDS) shows a compositional bias: low complexity. A compositionally biased stretch (polar residues) spans 437-450 (TKSQPHSSTSNQET). Phosphoserine is present on residues serine 451 and serine 453.

The protein belongs to the RANBP9/10 family. As to quaternary structure, may form homodimers. Identified in the CTLH complex that contains GID4, RANBP9 and/or RANBP10, MKLN1, MAEA, RMND5A (or alternatively its paralog RMND5B), GID8, ARMC8, WDR26 and YPEL5. Within this complex, MAEA, RMND5A (or alternatively its paralog RMND5B), GID8, WDR26, and RANBP9 and/or RANBP10 form the catalytic core, while GID4, MKLN1, ARMC8 and YPEL5 have ancillary roles. Interacts with RAN and RANBP9. Interacts with the HGF receptor MET. Interacts with AR. Interacts with TUBB1. Interacts with YPEL5. May interact with TUBB5. Interacts with DDX4. As to expression, expressed at highest levels in spleen and liver. Expressed in megakaryocytes and platelets (at protein level).

The protein resides in the cytoplasm. It is found in the nucleus. Functionally, may act as an adapter protein to couple membrane receptors to intracellular signaling pathways. Core component of the CTLH E3 ubiquitin-protein ligase complex that selectively accepts ubiquitin from UBE2H and mediates ubiquitination and subsequent proteasomal degradation of the transcription factor HBP1. Enhances dihydrotestosterone-induced transactivation activity of AR, as well as dexamethasone-induced transactivation activity of NR3C1, but does not affect estrogen-induced transactivation. Acts as a guanine nucleotide exchange factor (GEF) for RAN GTPase. May play an essential role in hemostasis and in maintaining microtubule dynamics with respect to both platelet shape and function. The polypeptide is Ran-binding protein 10 (Ranbp10) (Mus musculus (Mouse)).